The sequence spans 323 residues: tRNA N6-adenosine threonylcarbamoyltransferase (323 aa).

Fe cation-binding residues include His-110 and His-114. Residues 131–135 (VASGG), Asp-164, Gly-177, and Asn-264 each bind substrate. Residue Asp-288 participates in Fe cation binding.

It belongs to the KAE1 / TsaD family. Requires Fe(2+) as cofactor.

The protein resides in the cytoplasm. It catalyses the reaction L-threonylcarbamoyladenylate + adenosine(37) in tRNA = N(6)-L-threonylcarbamoyladenosine(37) in tRNA + AMP + H(+). Its function is as follows. Required for the formation of a threonylcarbamoyl group on adenosine at position 37 (t(6)A37) in tRNAs that read codons beginning with adenine. Is involved in the transfer of the threonylcarbamoyl moiety of threonylcarbamoyl-AMP (TC-AMP) to the N6 group of A37, together with TsaE and TsaB. TsaD likely plays a direct catalytic role in this reaction. The sequence is that of tRNA N6-adenosine threonylcarbamoyltransferase from Thermus thermophilus (strain ATCC BAA-163 / DSM 7039 / HB27).